We begin with the raw amino-acid sequence, 439 residues long: Innexin-19 (439 aa).

4 consecutive transmembrane segments (helical) span residues 33–53 (PLILAVCCLVISAKQYGGTPI), 103–123 (QWVPFILIAEALMFSLPCIFW), 199–219 (IVYSFTKLLYSVNVVAQFFIL), and 285–305 (VFAFLWCWYMILAIITTCSFI).

It belongs to the pannexin family.

Its subcellular location is the cell membrane. It localises to the cell junction. It is found in the gap junction. Its function is as follows. Structural component of the gap junctions that specifically coordinates left-right asymmetry in the developing nervous system. Acts by forming gap junction network linking embryonic neurons and providing electrical coupling between cells, leading to promote or inhibit AWC signaling. The polypeptide is Innexin-19 (inx-19) (Caenorhabditis briggsae).